A 96-amino-acid polypeptide reads, in one-letter code: Large ribosomal subunit protein uL18m (96 aa).

Belongs to the universal ribosomal protein uL18 family.

The protein localises to the mitochondrion. This chain is Large ribosomal subunit protein uL18m (RPL18), found in Reclinomonas americana.